The primary structure comprises 175 residues: MLTSGIILLSGGLLSPNPGLIFWTAVTFVIVLLILKQLAWGPIISALEEREKGIQSSIDRAYSAKDEAEAILRKNRDMLAKADLESERIIREGKEYGEKLRQEMAEKAQFEAKKMIASAKDEIEQEKRRALDVLRNEVADLAIMGAEKIIKSSLDADTQKKIVDSMIRDLASKRN.

Residues 20–40 traverse the membrane as a helical segment; the sequence is LIFWTAVTFVIVLLILKQLAW.

The protein belongs to the ATPase B chain family. As to quaternary structure, F-type ATPases have 2 components, F(1) - the catalytic core - and F(0) - the membrane proton channel. F(1) has five subunits: alpha(3), beta(3), gamma(1), delta(1), epsilon(1). F(0) has four main subunits: a(1), b(2) and c(10-14). The alpha and beta chains form an alternating ring which encloses part of the gamma chain. F(1) is attached to F(0) by a central stalk formed by the gamma and epsilon chains, while a peripheral stalk is formed by the delta and b chains.

The protein localises to the cell inner membrane. In terms of biological role, f(1)F(0) ATP synthase produces ATP from ADP in the presence of a proton or sodium gradient. F-type ATPases consist of two structural domains, F(1) containing the extramembraneous catalytic core and F(0) containing the membrane proton channel, linked together by a central stalk and a peripheral stalk. During catalysis, ATP synthesis in the catalytic domain of F(1) is coupled via a rotary mechanism of the central stalk subunits to proton translocation. Its function is as follows. Component of the F(0) channel, it forms part of the peripheral stalk, linking F(1) to F(0). The sequence is that of ATP synthase subunit b from Chlorobium limicola (strain DSM 245 / NBRC 103803 / 6330).